Reading from the N-terminus, the 564-residue chain is Kelch repeat and BTB domain-containing protein A55 (564 aa).

The BTB domain maps to 21 to 88 (CDISIVINDE…IYGIPLSLTN (68 aa)). 6 Kelch repeats span residues 252-297 (IELI…VLDN), 298-346 (IIYM…ADDE), 347-395 (YIYC…MLNG), 397-441 (IYVM…VHDG), 442-492 (KIYI…SAHN), and 494-539 (LYVG…CEPI).

Belongs to the poxviruses A55 protein family. As to quaternary structure, interacts (via BTB domain) with host CUL3.

The protein resides in the host cytoplasm. Probable substrate-specific adapter of CUL3-containing E3 ubiquitin-protein ligases which mediate the ubiquitination and subsequent proteasomal degradation of host target proteins. This Bos taurus (Bovine) protein is Kelch repeat and BTB domain-containing protein A55 (KBTB1).